The chain runs to 147 residues: Large ribosomal subunit protein uL15 (147 aa).

Residues Met1–Arg20 show a composition bias toward basic and acidic residues. The segment at Met1 to Leu64 is disordered. Positions Arg23–Cys33 are enriched in gly residues. Residues Gly34–Gly47 show a composition bias toward basic residues.

The protein belongs to the universal ribosomal protein uL15 family. Part of the 50S ribosomal subunit.

Functionally, binds to the 23S rRNA. The sequence is that of Large ribosomal subunit protein uL15 from Xanthomonas campestris pv. campestris (strain 8004).